Consider the following 361-residue polypeptide: 5-formaminoimidazole-4-carboxamide-1-(beta)-D-ribofuranosyl 5'-monophosphate synthetase (361 aa).

5-amino-1-(5-phospho-beta-D-ribosyl)imidazole-4-carboxamide contacts are provided by His27 and Ser94. The ATP-grasp domain maps to 116–348 (RAILRWEAER…MGQRIAKEIK (233 aa)). ATP contacts are provided by residues 146 to 208 (PDDI…ANYC) and Glu230. Position 258 (Asn258) interacts with 5-amino-1-(5-phospho-beta-D-ribosyl)imidazole-4-carboxamide. Positions 297 and 310 each coordinate Mg(2+).

This sequence belongs to the phosphohexose mutase family. Requires Mg(2+) as cofactor. Mn(2+) is required as a cofactor.

It catalyses the reaction 5-amino-1-(5-phospho-beta-D-ribosyl)imidazole-4-carboxamide + formate + ATP = 5-formamido-1-(5-phospho-D-ribosyl)imidazole-4-carboxamide + ADP + phosphate. Its pathway is purine metabolism; IMP biosynthesis via de novo pathway; 5-formamido-1-(5-phospho-D-ribosyl)imidazole-4-carboxamide from 5-amino-1-(5-phospho-D-ribosyl)imidazole-4-carboxamide (formate route): step 1/1. Functionally, catalyzes the ATP- and formate-dependent formylation of 5-aminoimidazole-4-carboxamide-1-beta-d-ribofuranosyl 5'-monophosphate (AICAR) to 5-formaminoimidazole-4-carboxamide-1-beta-d-ribofuranosyl 5'-monophosphate (FAICAR) in the absence of folates. This is 5-formaminoimidazole-4-carboxamide-1-(beta)-D-ribofuranosyl 5'-monophosphate synthetase from Methanococcus maripaludis (strain C6 / ATCC BAA-1332).